The chain runs to 286 residues: Homoserine kinase (286 aa).

78-88 (PLARGLGSSSS) contributes to the ATP binding site.

The protein belongs to the GHMP kinase family. Homoserine kinase subfamily.

Its subcellular location is the cytoplasm. It carries out the reaction L-homoserine + ATP = O-phospho-L-homoserine + ADP + H(+). It functions in the pathway amino-acid biosynthesis; L-threonine biosynthesis; L-threonine from L-aspartate: step 4/5. Its function is as follows. Catalyzes the ATP-dependent phosphorylation of L-homoserine to L-homoserine phosphate. The chain is Homoserine kinase from Streptococcus suis (strain 98HAH33).